A 211-amino-acid chain; its full sequence is MRNIQIALTKGRLEKHVIPLFEQIGIDCSELKNKGRKLVFQSKNTNVSFILVKAVDVATYVEHGVADIGIVGKDILMENEKDIYEMLDLGVGICKFCVASIPTYNPKSYRKKRIATKYPHITSTYFHDKGEDVEIIKIEGSVEIAPLLGLADAIVDIVETGKTLQENGLIVFEEMYFISARMIVNKAALKTKKDEIFSIINMMEQEILSGK.

It belongs to the ATP phosphoribosyltransferase family. Short subfamily. In terms of assembly, heteromultimer composed of HisG and HisZ subunits.

It localises to the cytoplasm. It catalyses the reaction 1-(5-phospho-beta-D-ribosyl)-ATP + diphosphate = 5-phospho-alpha-D-ribose 1-diphosphate + ATP. It functions in the pathway amino-acid biosynthesis; L-histidine biosynthesis; L-histidine from 5-phospho-alpha-D-ribose 1-diphosphate: step 1/9. Its function is as follows. Catalyzes the condensation of ATP and 5-phosphoribose 1-diphosphate to form N'-(5'-phosphoribosyl)-ATP (PR-ATP). Has a crucial role in the pathway because the rate of histidine biosynthesis seems to be controlled primarily by regulation of HisG enzymatic activity. The protein is ATP phosphoribosyltransferase of Bacillus cereus (strain ATCC 14579 / DSM 31 / CCUG 7414 / JCM 2152 / NBRC 15305 / NCIMB 9373 / NCTC 2599 / NRRL B-3711).